We begin with the raw amino-acid sequence, 117 residues long: Large ribosomal subunit protein bL17 (117 aa).

This sequence belongs to the bacterial ribosomal protein bL17 family. In terms of assembly, part of the 50S ribosomal subunit. Contacts protein L32.

This chain is Large ribosomal subunit protein bL17, found in Dehalococcoides mccartyi (strain ATCC BAA-2100 / JCM 16839 / KCTC 5957 / BAV1).